Here is a 616-residue protein sequence, read N- to C-terminus: Chaperone protein HscA (616 aa).

This sequence belongs to the heat shock protein 70 family.

Functionally, chaperone involved in the maturation of iron-sulfur cluster-containing proteins. Has a low intrinsic ATPase activity which is markedly stimulated by HscB. Involved in the maturation of IscU. The sequence is that of Chaperone protein HscA from Enterobacter sp. (strain 638).